Consider the following 393-residue polypeptide: Matrix metalloproteinase-23 (393 aa).

The Cytoplasmic portion of the chain corresponds to methionine 1–glutamine 20. Residues methionine 1–arginine 81 constitute a propeptide that is removed on maturation. Residues leucine 21–glycine 41 form a helical; Signal-anchor for type II membrane protein membrane-spanning segment. Topologically, residues threonine 42–serine 393 are lumenal. The tract at residues threonine 60 to arginine 79 is disordered. N-linked (GlcNAc...) asparagine glycosylation is found at asparagine 95 and asparagine 151. Histidine 214 serves as a coordination point for Zn(2+). The active site involves glutamate 215. 2 residues coordinate Zn(2+): histidine 218 and histidine 224. A glycan (N-linked (GlcNAc...) asparagine) is linked at asparagine 235. Residues cysteine 258–cysteine 292 enclose the ShKT domain. 3 cysteine pairs are disulfide-bonded: cysteine 258–cysteine 292, cysteine 265–cysteine 285, and cysteine 274–cysteine 289. In terms of domain architecture, Ig-like C2-type spans proline 298–serine 383. A glycan (N-linked (GlcNAc...) asparagine) is linked at asparagine 319. A disulfide bridge connects residues cysteine 324 and cysteine 373.

This sequence belongs to the peptidase M10A family. It depends on Zn(2+) as a cofactor. In terms of processing, N-glycosylated. Proteolytic cleavage might yield an active form.

It is found in the membrane. Its subcellular location is the endoplasmic reticulum membrane. Protease. May regulate the surface expression of some potassium channels by retaining them in the endoplasmic reticulum. This Bos taurus (Bovine) protein is Matrix metalloproteinase-23 (MMP23).